Reading from the N-terminus, the 72-residue chain is Galensin (72 aa).

The N-terminal stretch at 1–22 (MLTLKKSMLLLFFLGLVSVSLA) is a signal peptide. Positions 23 to 48 (DDKREDEAEEGEDKRAAEEERNVEKR) are excised as a propeptide. Position 71 is a phenylalanine amide (Phe71).

This sequence belongs to the frog skin active peptide (FSAP) family. Brevinin subfamily. In terms of assembly, homodimer; disulfide-linked. As to expression, expressed by the skin glands.

The protein localises to the secreted. Its function is as follows. Antibacterial activity against the Gram-positive bacterium M.luteus and the Gram-negative bacterium E.coli. In Kassina senegalensis (Senegal running frog), this protein is Galensin.